We begin with the raw amino-acid sequence, 251 residues long: Hydroxyacylglutathione hydrolase (251 aa).

Residues histidine 53, histidine 55, aspartate 57, histidine 58, histidine 110, aspartate 127, and histidine 165 each contribute to the Zn(2+) site.

This sequence belongs to the metallo-beta-lactamase superfamily. Glyoxalase II family. In terms of assembly, monomer. Zn(2+) serves as cofactor.

It carries out the reaction an S-(2-hydroxyacyl)glutathione + H2O = a 2-hydroxy carboxylate + glutathione + H(+). It functions in the pathway secondary metabolite metabolism; methylglyoxal degradation; (R)-lactate from methylglyoxal: step 2/2. Thiolesterase that catalyzes the hydrolysis of S-D-lactoyl-glutathione to form glutathione and D-lactic acid. The polypeptide is Hydroxyacylglutathione hydrolase (Blochmanniella pennsylvanica (strain BPEN)).